A 113-amino-acid polypeptide reads, in one-letter code: UPF0416 protein RF_0879 (113 aa).

The protein belongs to the UPF0416 family.

The polypeptide is UPF0416 protein RF_0879 (Rickettsia felis (strain ATCC VR-1525 / URRWXCal2) (Rickettsia azadi)).